The primary structure comprises 391 residues: Homocysteine-responsive endoplasmic reticulum-resident ubiquitin-like domain member 1 protein (391 aa).

An N-acetylmethionine modification is found at M1. The Cytoplasmic segment spans residues 1 to 263; the sequence is MESETEPEPV…VEEDDEINRD (263 aa). Residues 10 to 72 enclose the Ubiquitin-like domain; that stretch reads VTLLVKSPNQ…LLDHQCLRDL (63 aa). The disordered stretch occupies residues 100-126; sequence KVAESTEEPAGSNRGQYPEDSSSDGLR. Positions 112 to 124 are enriched in polar residues; it reads NRGQYPEDSSSDG. The tract at residues 115-200 is interaction with UBQLN1; sequence QYPEDSSSDG…ASGAFVPPPS (86 aa). S135 carries the post-translational modification Phosphoserine. Residues 264–284 form a helical membrane-spanning segment; that stretch reads WLDWTYSAATFSVFLSILYFY. Topologically, residues 285–289 are lumenal; sequence SSLSR. A helical membrane pass occupies residues 290-310; the sequence is FLMVMGATVVMYLHHVGWFPF. At 311–391 the chain is on the cytoplasmic side; it reads RPRPVQNFPN…LPEGPPAIAN (81 aa). The segment at 318–359 is disordered; sequence FPNDGPPPDIVNQDPNNNLQEGTDPETEDPNHVPPDRGVLDG. Residues 346–357 show a composition bias toward basic and acidic residues; that stretch reads DPNHVPPDRGVL.

As to quaternary structure, interacts with PSEN1 and PSEN2. Interacts with UBXN6. Interacts with UBQLN1, UBQLN2 and UBQLN4. Component of the HRD1 complex, which comprises at least SYNV1/HRD1, FAM8A1, HERPUD1/HERP, OS9, SEL1L and UBE2J1. FAM8A1 binding to SYNV1 may promote recruitment of HERPUD1 to the HRD1 complex.

It localises to the endoplasmic reticulum membrane. Functionally, component of the endoplasmic reticulum quality control (ERQC) system also called ER-associated degradation (ERAD) involved in ubiquitin-dependent degradation of misfolded endoplasmic reticulum proteins. Binds to ubiquilins and this interaction is required for efficient degradation of CD3D via the ERAD pathway. This chain is Homocysteine-responsive endoplasmic reticulum-resident ubiquitin-like domain member 1 protein (HERPUD1), found in Pongo abelii (Sumatran orangutan).